The following is a 199-amino-acid chain: MAKILVLYYSMYGHIETLAEAVAEGARRVSGVEVTLKRVPETIPAEAFAKAGGKQDQKAPVASPQELADYDGIIFGTPTRFGNMAGQMRTFLDQTGGLWASGALYGKVGSVFSSTGTGGGQEHTITSTWTTLAHHGFIIVPIGYATPELFDVSHVRGGTPYGATTIAGGDGSRQPSQEELTIARYQGEHVAKITAKLKS.

Residues 4 to 190 enclose the Flavodoxin-like domain; sequence ILVLYYSMYG…TIARYQGEHV (187 aa). FMN-binding positions include 10–15 and 79–81; these read SMYGHI and TRF. Y12 contributes to the NAD(+) binding site. W99 is a substrate binding site. FMN contacts are provided by residues 114–119 and H134; that span reads STGTGG.

This sequence belongs to the WrbA family. FMN serves as cofactor.

It carries out the reaction a quinone + NADH + H(+) = a quinol + NAD(+). The enzyme catalyses a quinone + NADPH + H(+) = a quinol + NADP(+). The chain is NAD(P)H dehydrogenase (quinone) from Serratia proteamaculans (strain 568).